The sequence spans 153 residues: Cell division protein SepF (153 aa).

Belongs to the SepF family. In terms of assembly, homodimer. Interacts with FtsZ.

It localises to the cytoplasm. Its function is as follows. Cell division protein that is part of the divisome complex and is recruited early to the Z-ring. Probably stimulates Z-ring formation, perhaps through the cross-linking of FtsZ protofilaments. Its function overlaps with FtsA. The sequence is that of Cell division protein SepF from Clostridium tetani (strain Massachusetts / E88).